A 152-amino-acid chain; its full sequence is Ribonuclease pancreatic gamma-type (152 aa).

The signal sequence occupies residues 1 to 25 (MGLEKSFILFSLLVLVLGCVQPSLV). A disordered region spans residues 26–48 (GESKESPSEKFKRRHMDEEGPYQ). The segment covering 27 to 43 (ESKESPSEKFKRRHMDE) has biased composition (basic and acidic residues). Positions 35 and 38 each coordinate substrate. His-40 functions as the Proton acceptor in the catalytic mechanism. Disulfide bonds link Cys-54–Cys-112, Cys-68–Cys-123, Cys-86–Cys-138, and Cys-93–Cys-100. Residues 69–73 (KPLNT) and Lys-94 contribute to the substrate site. The active-site Proton donor is His-147.

The protein belongs to the pancreatic ribonuclease family. Monomer.

Its subcellular location is the secreted. It carries out the reaction an [RNA] containing cytidine + H2O = an [RNA]-3'-cytidine-3'-phosphate + a 5'-hydroxy-ribonucleotide-3'-[RNA].. The catalysed reaction is an [RNA] containing uridine + H2O = an [RNA]-3'-uridine-3'-phosphate + a 5'-hydroxy-ribonucleotide-3'-[RNA].. In terms of biological role, endonuclease that catalyzes the cleavage of RNA on the 3' side of pyrimidine nucleotides. Acts on single-stranded and double-stranded RNA. This is Ribonuclease pancreatic gamma-type from Rattus fuscipes (Bush rat).